We begin with the raw amino-acid sequence, 419 residues long: Murein hydrolase activator EnvC (419 aa).

An N-terminal signal peptide occupies residues 1–34; that stretch reads MTRAVKPRRFAIRPIIYASVLSAGVLLCAFSAHA. Coiled-coil stretches lie at residues 35 to 124 and 155 to 271; these read DERD…LDAA and LNQA…ATRK. The segment covering 252–270 has biased composition (basic and acidic residues); sequence EREAREAQAVRDRQKEATR. The disordered stretch occupies residues 252–290; sequence EREAREAQAVRDRQKEATRKGTTYKPTESEKSLMSRTGG.

The protein belongs to the peptidase M23B family.

It is found in the periplasm. Functionally, activator of the cell wall hydrolases AmiA and AmiB. Required for septal murein cleavage and daughter cell separation during cell division. In vitro, exhibits weak endoproteolytic activity on beta-casein. The sequence is that of Murein hydrolase activator EnvC (envC) from Escherichia coli (strain K12).